The chain runs to 471 residues: Pachytene checkpoint protein 2 homolog (471 aa).

213–220 (GPPGTGKT) is an ATP binding site.

Belongs to the AAA ATPase family. PCH2 subfamily.

Plays a key role in chromosome recombination during meiosis. This is Pachytene checkpoint protein 2 homolog from Oryza sativa subsp. indica (Rice).